The sequence spans 123 residues: Putative C-type lectin protein FPV003/FPV258 (123 aa).

The region spanning 21 to 122 is the C-type lectin domain; it reads CRGPYTSYNN…CNATYGFVCI (102 aa).

This is Putative C-type lectin protein FPV003/FPV258 from Fowlpox virus (strain NVSL) (FPV).